Here is a 136-residue protein sequence, read N- to C-terminus: Ribosome-binding factor A (136 aa).

Belongs to the RbfA family. In terms of assembly, monomer. Binds 30S ribosomal subunits, but not 50S ribosomal subunits or 70S ribosomes.

The protein localises to the cytoplasm. Its function is as follows. One of several proteins that assist in the late maturation steps of the functional core of the 30S ribosomal subunit. Associates with free 30S ribosomal subunits (but not with 30S subunits that are part of 70S ribosomes or polysomes). Required for efficient processing of 16S rRNA. May interact with the 5'-terminal helix region of 16S rRNA. This Yersinia enterocolitica serotype O:8 / biotype 1B (strain NCTC 13174 / 8081) protein is Ribosome-binding factor A.